Here is a 333-residue protein sequence, read N- to C-terminus: Ribosomal protein L11 methyltransferase (333 aa).

Residues Thr-181, Gly-202, Asp-224, and Asn-268 each contribute to the S-adenosyl-L-methionine site.

The protein belongs to the methyltransferase superfamily. PrmA family.

Its subcellular location is the cytoplasm. It catalyses the reaction L-lysyl-[protein] + 3 S-adenosyl-L-methionine = N(6),N(6),N(6)-trimethyl-L-lysyl-[protein] + 3 S-adenosyl-L-homocysteine + 3 H(+). Its function is as follows. Methylates ribosomal protein L11. This is Ribosomal protein L11 methyltransferase from Helicobacter pylori (strain ATCC 700392 / 26695) (Campylobacter pylori).